We begin with the raw amino-acid sequence, 45 residues long: Large ribosomal subunit protein bL34 (45 aa).

This sequence belongs to the bacterial ribosomal protein bL34 family.

This chain is Large ribosomal subunit protein bL34, found in Arthrobacter sp. (strain FB24).